The sequence spans 45 residues: Large ribosomal subunit protein bL34 (45 aa).

A disordered region spans residues 1–24 (MTKRTFGGTSRKRKRVSGFRVRMR). The span at 10-24 (SRKRKRVSGFRVRMR) shows a compositional bias: basic residues.

This sequence belongs to the bacterial ribosomal protein bL34 family.

This chain is Large ribosomal subunit protein bL34, found in Prochlorococcus marinus (strain MIT 9303).